The sequence spans 228 residues: Orotidine 5'-phosphate decarboxylase (228 aa).

Substrate-binding positions include aspartate 8, lysine 30, 59-68, threonine 118, arginine 178, glutamine 187, glycine 207, and arginine 208; that span reads DLKLHDIPNT. Lysine 61 acts as the Proton donor in catalysis.

This sequence belongs to the OMP decarboxylase family. Type 1 subfamily. Homodimer.

It carries out the reaction orotidine 5'-phosphate + H(+) = UMP + CO2. The protein operates within pyrimidine metabolism; UMP biosynthesis via de novo pathway; UMP from orotate: step 2/2. Its function is as follows. Catalyzes the decarboxylation of orotidine 5'-monophosphate (OMP) to uridine 5'-monophosphate (UMP). The chain is Orotidine 5'-phosphate decarboxylase from Wolinella succinogenes (strain ATCC 29543 / DSM 1740 / CCUG 13145 / JCM 31913 / LMG 7466 / NCTC 11488 / FDC 602W) (Vibrio succinogenes).